A 613-amino-acid chain; its full sequence is MSETTLKITTGPLPGSRKIYVEGSRPDVRVAMREIDLTPGSGEAPVRVYDCSGPYTDPSMQVDITKGVPRLREQWILERGDVEHYEGRAHKPEDDGLKPGETIGVPVFDRAGAGLRPLRAKPGKAPTQLAYARAGIITPEMEYVAIRENMKRAEMKAAVVRDGEDFGADIPDEVTPEFVRAEIARGRAVLPANVNHPEAEPMIIGRNFLTKINANIGNSAVASSVDEEVEKMVWATRWGADTVMDLSTGRHIHATREWIIRNSPVPIGTVPIYQALEKVDGKAEDLTWEIFRDTLIEQAEQGVDYFTIHAGVLLRYIPLTAKRTTGIVSRGGSIMAKWCLAHHKENFLYTHFEEICELLKAYDVGFSLGDGLRPGSIADANDAAQFGELETLGELTHKAWAHDCQVIIEGPGHVPMHKIKKNVEKQIELCGEAPFYTLGPLVTDIAPGYDHITSAIGAAMIGWFGTAMLCYVTPKEHLGLPDKQDVREGVVTYKLAAHAADLAKGHPGAQVRDNALSRARFEFRWKDQFNLSLDPEKALAFHDQHLPAEGAKLAHFCSMCGPKFCSMKISQEVRDFAAAEQGMAEMSEKFVNDGAEIYHTEPAQAQQAKPAAE.

Residues N215, M244, Y273, H309, S329–G331, D370–R373, and E409 each bind substrate. H413 contributes to the Zn(2+) binding site. Y436 is a binding site for substrate. Residue H477 participates in Zn(2+) binding. Residues C557, C560, and C565 each coordinate [4Fe-4S] cluster.

The protein belongs to the ThiC family. Homodimer. The cofactor is [4Fe-4S] cluster.

It catalyses the reaction 5-amino-1-(5-phospho-beta-D-ribosyl)imidazole + S-adenosyl-L-methionine = 4-amino-2-methyl-5-(phosphooxymethyl)pyrimidine + CO + 5'-deoxyadenosine + formate + L-methionine + 3 H(+). The protein operates within cofactor biosynthesis; thiamine diphosphate biosynthesis. Its function is as follows. Catalyzes the synthesis of the hydroxymethylpyrimidine phosphate (HMP-P) moiety of thiamine from aminoimidazole ribotide (AIR) in a radical S-adenosyl-L-methionine (SAM)-dependent reaction. This Paramagnetospirillum magneticum (strain ATCC 700264 / AMB-1) (Magnetospirillum magneticum) protein is Phosphomethylpyrimidine synthase.